Reading from the N-terminus, the 327-residue chain is Phenylalanine--tRNA ligase alpha subunit (327 aa).

E252 contributes to the Mg(2+) binding site.

This sequence belongs to the class-II aminoacyl-tRNA synthetase family. Phe-tRNA synthetase alpha subunit type 1 subfamily. Tetramer of two alpha and two beta subunits. Mg(2+) is required as a cofactor.

It localises to the cytoplasm. The catalysed reaction is tRNA(Phe) + L-phenylalanine + ATP = L-phenylalanyl-tRNA(Phe) + AMP + diphosphate + H(+). The sequence is that of Phenylalanine--tRNA ligase alpha subunit from Klebsiella pneumoniae (strain 342).